Reading from the N-terminus, the 182-residue chain is Ribosome-recycling factor (182 aa).

This sequence belongs to the RRF family.

It localises to the cytoplasm. In terms of biological role, responsible for the release of ribosomes from messenger RNA at the termination of protein biosynthesis. May increase the efficiency of translation by recycling ribosomes from one round of translation to another. This chain is Ribosome-recycling factor, found in Prochlorococcus marinus subsp. pastoris (strain CCMP1986 / NIES-2087 / MED4).